Consider the following 363-residue polypeptide: NAD(P)H-quinone oxidoreductase subunit 1, chloroplastic (363 aa).

The next 6 membrane-spanning stretches (helical) occupy residues 26–46 (IIWVLIPIFTPVLGITIGVLV), 98–118 (FSIGPSIAVISILLSYLVIPF), 127–147 (LSIGVFLWIAISSIAPVGLLM), 253–273 (FGLFYVASYLNLLVSSLFVTV), 300–320 (VFGTIIGIFITLAKTYLFLFI), and 336–356 (LLNLGWKFLLPISLGNLLLTT).

It belongs to the complex I subunit 1 family. As to quaternary structure, NDH is composed of at least 16 different subunits, 5 of which are encoded in the nucleus.

It localises to the plastid. Its subcellular location is the chloroplast thylakoid membrane. The enzyme catalyses a plastoquinone + NADH + (n+1) H(+)(in) = a plastoquinol + NAD(+) + n H(+)(out). It carries out the reaction a plastoquinone + NADPH + (n+1) H(+)(in) = a plastoquinol + NADP(+) + n H(+)(out). Functionally, NDH shuttles electrons from NAD(P)H:plastoquinone, via FMN and iron-sulfur (Fe-S) centers, to quinones in the photosynthetic chain and possibly in a chloroplast respiratory chain. The immediate electron acceptor for the enzyme in this species is believed to be plastoquinone. Couples the redox reaction to proton translocation, and thus conserves the redox energy in a proton gradient. The sequence is that of NAD(P)H-quinone oxidoreductase subunit 1, chloroplastic from Helianthus annuus (Common sunflower).